Consider the following 204-residue polypeptide: Ribosomal RNA small subunit methyltransferase J (204 aa).

S-adenosyl-L-methionine-binding positions include 55–56 (RD), 71–72 (ER), and aspartate 123.

Belongs to the methyltransferase superfamily. RsmJ family.

It localises to the cytoplasm. It catalyses the reaction guanosine(1516) in 16S rRNA + S-adenosyl-L-methionine = N(2)-methylguanosine(1516) in 16S rRNA + S-adenosyl-L-homocysteine + H(+). Functionally, specifically methylates the guanosine in position 1516 of 16S rRNA. This is Ribosomal RNA small subunit methyltransferase J from Rhodopseudomonas palustris (strain ATCC BAA-98 / CGA009).